A 283-amino-acid chain; its full sequence is Bifunctional protein FolD (283 aa).

Residues 165-167 (GRS) and serine 190 contribute to the NADP(+) site.

This sequence belongs to the tetrahydrofolate dehydrogenase/cyclohydrolase family. In terms of assembly, homodimer.

The catalysed reaction is (6R)-5,10-methylene-5,6,7,8-tetrahydrofolate + NADP(+) = (6R)-5,10-methenyltetrahydrofolate + NADPH. It carries out the reaction (6R)-5,10-methenyltetrahydrofolate + H2O = (6R)-10-formyltetrahydrofolate + H(+). Its pathway is one-carbon metabolism; tetrahydrofolate interconversion. Catalyzes the oxidation of 5,10-methylenetetrahydrofolate to 5,10-methenyltetrahydrofolate and then the hydrolysis of 5,10-methenyltetrahydrofolate to 10-formyltetrahydrofolate. The polypeptide is Bifunctional protein FolD (Paracidovorax citrulli (strain AAC00-1) (Acidovorax citrulli)).